The primary structure comprises 310 residues: Uracil phosphoribosyltransferase homolog (310 aa).

2 disordered regions span residues 1–27 and 62–89; these read MASELQRPDSMPCHNRQVNSTSSPSPE and SERDSPACCSTNLHSENHSDSSDSGNYD. Residues 16 to 25 are compositionally biased toward polar residues; it reads RQVNSTSSPS. Residue S25 is modified to Phosphoserine. Residues R134, R143, and 177–180 contribute to the GTP site; that span reads EKGN. R187 lines the 5-phospho-alpha-D-ribose 1-diphosphate pocket. The GTP site is built by R204 and R233. 239–247 serves as a coordination point for 5-phospho-alpha-D-ribose 1-diphosphate; it reads YPILSTGNT. Residue 300–302 participates in uracil binding; sequence THF.

The protein belongs to the UPRTase family.

It is found in the cytoplasm. The protein resides in the nucleus. This Mus musculus (Mouse) protein is Uracil phosphoribosyltransferase homolog (Uprt).